The sequence spans 449 residues: MKSYEVNFDGLVGPTHNYGGLSYGNVASQSNSQQGSNPREAARQGLAKMKALADMGFKQGVLAPQERPDVAALRRLGFSGSDAEVIQRAAADAMPLLVASCSASSMWVANAATVSPSADTADGRVHFTAANLNCKYHRSIEHPTTSRVLGAMFNNEKHFAHHPALPAVAQFGDEGAANHTRFCSAYGEAGVEFFVYGRSAFDSRYPAPQKYPARQTLEASQAVARLHGLSDDGVVYAQQNPAVIDQGVFHNDVISVGNGEVLFYHEDAFLETDAVLGQLRAKLASKGGNFQAICVPRAAVTVEDAVRSYLFNSQLLSRDDGSMLLVVPEECRNNERVWAYLGQLTSQGGPVNEVKIFDLKQSMQNGGGPACLRLRVALKETELAAVNQGVIMTASLYDTLLQWVDRHYRDRLGEADLADPQLLVECRTALDELTQILKLGSVYPFQRQP.

Substrate contacts are provided by residues 19–28 (GGLSYGNVAS), N110, and 137–138 (HR). Residues 23 to 43 (YGNVASQSNSQQGSNPREAAR) form a disordered region. Over residues 25-37 (NVASQSNSQQGSN) the composition is skewed to polar residues. Residue E174 is part of the active site. R214 is a substrate binding site. The active site involves H250. D252 and N365 together coordinate substrate. The Nucleophile role is filled by C371.

The protein belongs to the succinylarginine dihydrolase family. In terms of assembly, homodimer.

It catalyses the reaction N(2)-succinyl-L-arginine + 2 H2O + 2 H(+) = N(2)-succinyl-L-ornithine + 2 NH4(+) + CO2. Its pathway is amino-acid degradation; L-arginine degradation via AST pathway; L-glutamate and succinate from L-arginine: step 2/5. Catalyzes the hydrolysis of N(2)-succinylarginine into N(2)-succinylornithine, ammonia and CO(2). This is N-succinylarginine dihydrolase from Pseudomonas putida (strain GB-1).